Reading from the N-terminus, the 292-residue chain is 4-hydroxybenzoate octaprenyltransferase (292 aa).

8 helical membrane-spanning segments follow: residues 20–40, 43–63, 94–114, 135–155, 160–180, 209–229, 234–254, and 266–286; these read IGILLLLWPTLWGLWLAADGM, PMILVIFILGTILMRSAGCAI, LLIAAGLSLCAFLLILPLNLL, FFAMPQAYLGIAFSFGIPMAF, GTVPPLAWLLVLANLFWVIAY, VAGILLCHIIFLSTLTYAGIL, IWFYGALLVALGLVIVQYGMI, and FLHNNWIGAVIFAGILLDTLF.

The protein belongs to the UbiA prenyltransferase family. Mg(2+) serves as cofactor.

It is found in the cell inner membrane. The catalysed reaction is all-trans-octaprenyl diphosphate + 4-hydroxybenzoate = 4-hydroxy-3-(all-trans-octaprenyl)benzoate + diphosphate. Its pathway is cofactor biosynthesis; ubiquinone biosynthesis. Catalyzes the prenylation of para-hydroxybenzoate (PHB) with an all-trans polyprenyl group. Mediates the second step in the final reaction sequence of ubiquinone-8 (UQ-8) biosynthesis, which is the condensation of the polyisoprenoid side chain with PHB, generating the first membrane-bound Q intermediate 3-octaprenyl-4-hydroxybenzoate. This Nitrosomonas europaea (strain ATCC 19718 / CIP 103999 / KCTC 2705 / NBRC 14298) protein is 4-hydroxybenzoate octaprenyltransferase.